We begin with the raw amino-acid sequence, 248 residues long: tRNA (guanine-N(1)-)-methyltransferase (248 aa).

S-adenosyl-L-methionine-binding positions include Gly113 and 133 to 138; that span reads IGDYVL.

It belongs to the RNA methyltransferase TrmD family. Homodimer.

Its subcellular location is the cytoplasm. It carries out the reaction guanosine(37) in tRNA + S-adenosyl-L-methionine = N(1)-methylguanosine(37) in tRNA + S-adenosyl-L-homocysteine + H(+). Its function is as follows. Specifically methylates guanosine-37 in various tRNAs. The sequence is that of tRNA (guanine-N(1)-)-methyltransferase from Shewanella piezotolerans (strain WP3 / JCM 13877).